Here is a 416-residue protein sequence, read N- to C-terminus: D-amino acid dehydrogenase (416 aa).

FAD is bound at residue 3–17 (ITILGSGVIGVTTAY).

Belongs to the DadA oxidoreductase family. It depends on FAD as a cofactor.

It catalyses the reaction a D-alpha-amino acid + A + H2O = a 2-oxocarboxylate + AH2 + NH4(+). Oxidative deamination of D-amino acids. This chain is D-amino acid dehydrogenase, found in Brucella suis biovar 1 (strain 1330).